The chain runs to 373 residues: GTPase Obg (373 aa).

The Obg domain maps to 1–158 (MFVDSVELLI…KQVRLEMKLI (158 aa)). A disordered region spans residues 62 to 83 (NHIKAENGRPGEGRKKYGRKGQ). A compositionally biased stretch (basic and acidic residues) spans 64-76 (IKAENGRPGEGRK). Residues 159–362 (ADVGLVGYPN…LRYALGDFVK (204 aa)) enclose the OBG-type G domain. Residues 165–172 (GYPNVGKS), 190–194 (FTTLT), 212–215 (DIPG), 280–283 (TKID), and 343–345 (SSV) each bind GTP. Mg(2+)-binding residues include serine 172 and threonine 192.

It belongs to the TRAFAC class OBG-HflX-like GTPase superfamily. OBG GTPase family. As to quaternary structure, monomer. It depends on Mg(2+) as a cofactor.

The protein localises to the cytoplasm. An essential GTPase which binds GTP, GDP and possibly (p)ppGpp with moderate affinity, with high nucleotide exchange rates and a fairly low GTP hydrolysis rate. Plays a role in control of the cell cycle, stress response, ribosome biogenesis and in those bacteria that undergo differentiation, in morphogenesis control. This is GTPase Obg from Sulfurovum sp. (strain NBC37-1).